Here is a 237-residue protein sequence, read N- to C-terminus: Small ribosomal subunit protein eS4 (237 aa).

One can recognise an S4 RNA-binding domain in the interval 38 to 110; the sequence is LPLAVVVRDV…EAKYYDLKPI (73 aa).

This sequence belongs to the eukaryotic ribosomal protein eS4 family.

The protein is Small ribosomal subunit protein eS4 of Pyrobaculum calidifontis (strain DSM 21063 / JCM 11548 / VA1).